Here is a 769-residue protein sequence, read N- to C-terminus: Probable beta-glucosidase M (769 aa).

The first 22 residues, 1–22 (MHSNVGLAGLAGLLATASVCLS), serve as a signal peptide directing secretion. Asn-28, Asn-75, and Asn-262 each carry an N-linked (GlcNAc...) asparagine glycan. Asp-290 is a catalytic residue. N-linked (GlcNAc...) asparagine glycosylation is found at Asn-318, Asn-325, Asn-396, Asn-437, Asn-510, Asn-546, and Asn-625.

It belongs to the glycosyl hydrolase 3 family.

It localises to the secreted. The enzyme catalyses Hydrolysis of terminal, non-reducing beta-D-glucosyl residues with release of beta-D-glucose.. The protein operates within glycan metabolism; cellulose degradation. In terms of biological role, beta-glucosidases are one of a number of cellulolytic enzymes involved in the degradation of cellulosic biomass. Catalyzes the last step releasing glucose from the inhibitory cellobiose. The protein is Probable beta-glucosidase M (bglM) of Aspergillus fumigatus (strain CBS 144.89 / FGSC A1163 / CEA10) (Neosartorya fumigata).